Here is a 564-residue protein sequence, read N- to C-terminus: 60 kDa lysophospholipase (564 aa).

Residues 9–355 (RRLLAIYTGG…NDRKKLLAKD (347 aa)) form the Asparaginase/glutaminase domain. T19 serves as the catalytic Acyl-ester intermediate. The interval 41–350 (TLHMFHDEEY…PGLSLNDRKK (310 aa)) is asparaginase. Substrate-binding positions include 84–86 (DSS) and 116–117 (TD). ANK repeat units follow at residues 141–170 (GAQV…YVIP), 396–426 (VLLP…DLNL), 430–459 (SGQT…DVDA), 463–492 (DGQS…RLSP), and 530–559 (DGHC…SVCA). S478 carries the post-translational modification Phosphoserine.

The protein in the N-terminal section; belongs to the asparaginase 1 family. As to quaternary structure, monomer.

It catalyses the reaction a 1-acyl-sn-glycero-3-phosphocholine + H2O = sn-glycerol 3-phosphocholine + a fatty acid + H(+). It carries out the reaction L-asparagine + H2O = L-aspartate + NH4(+). The catalysed reaction is a 1-O-alkyl-2-acetyl-sn-glycero-3-phosphocholine + H2O = a 1-O-alkyl-sn-glycero-3-phosphocholine + acetate + H(+). The enzyme catalyses 1-hexadecanoyl-sn-glycero-3-phosphocholine + H2O = sn-glycerol 3-phosphocholine + hexadecanoate + H(+). It catalyses the reaction 2 1-hexadecanoyl-sn-glycero-3-phosphocholine = 1,2-dihexadecanoyl-sn-glycero-3-phosphocholine + sn-glycerol 3-phosphocholine. It carries out the reaction 1-octadecanoyl-sn-glycero-3-phosphocholine + H2O = octadecanoate + sn-glycerol 3-phosphocholine + H(+). The catalysed reaction is 1-(9Z-octadecenoyl)-sn-glycero-3-phosphocholine + H2O = sn-glycerol 3-phosphocholine + (9Z)-octadecenoate + H(+). The enzyme catalyses 1-hexadecanoyl-sn-glycero-3-phosphoethanolamine + H2O = sn-glycero-3-phosphoethanolamine + hexadecanoate + H(+). It catalyses the reaction 1-(9Z-octadecenoyl)-sn-glycero-3-phosphoethanolamine + H2O = sn-glycero-3-phosphoethanolamine + (9Z)-octadecenoate + H(+). It carries out the reaction 1-hexadecanoyl-sn-glycero-3-phosphoethanolamine + 1-hexadecanoyl-sn-glycero-3-phosphocholine = 1,2-dihexadecanoyl-sn-glycero-3-phosphoethanolamine + sn-glycerol 3-phosphocholine. The catalysed reaction is 2-(5Z,8Z,11Z,14Z)-eicosatetraenoyl-sn-glycero-3-phosphocholine + H2O = sn-glycerol 3-phosphocholine + (5Z,8Z,11Z,14Z)-eicosatetraenoate + H(+). The enzyme catalyses 2-hexadecanoyl-sn-glycero-3-phosphocholine + H2O = sn-glycerol 3-phosphocholine + hexadecanoate + H(+). It catalyses the reaction 2 2-hexadecanoyl-sn-glycero-3-phosphocholine = 1,2-dihexadecanoyl-sn-glycero-3-phosphocholine + sn-glycerol 3-phosphocholine. It carries out the reaction 1-O-(9Z)-octadecenoyl-2-O-acetyl-sn-glycero-3-phosphocholine + H2O = 2-acetyl-sn-glycero-3-phosphocholine + (9Z)-octadecenoate + H(+). The catalysed reaction is a 1-acyl-sn-glycero-3-phospho-(1D-myo-inositol) + 1-hexadecanoyl-sn-glycero-3-phosphocholine = a 1-acyl-2-hexadecanoyl-sn-glycero-3-phospho-(1D-myo-inositol) + sn-glycerol 3-phosphocholine. The enzyme catalyses 2 2-(5Z,8Z,11Z,14Z)-eicosatetraenoyl-sn-glycero-3-phosphocholine = 1,2-di-(5Z,8Z,11Z,14Z-eicosatetraenoyl)-sn-glycero-3-phosphocholine + sn-glycerol 3-phosphocholine. Functionally, exhibits lysophospholipase, transacylase, PAF acetylhydrolase and asparaginase activities. Can catalyze three types of transacylation reactions: (1) acyl transfer from 1-acyl-sn-glycero-3-phosphocholine (1-acyl-GPC) to the sn-1(3) positions of glycerol and 2-acylglycerol (sn-1 to -1(3) transfer), (2) acyl transfer from 1-acyl-GPC to the sn-2 positions of 1-acyl-GPC, 1-acyl-sn-glycero-3-phosphoethanolamine (1-acyl-GPE), and other lysophospholipids (sn-1 to -2 transfer) and (3) acyl transfer from 2-acyl-GPC to the sn-1 position of 2-acyl-GPC and 2-acyl-GPE (sn-2 to -1 transfer). Mediates the synthesis of 1-arachidonoyl species of phospholipids by transferring the arachidonoyl residue from 2-arachidonoyl lysophospholipid to the sn-1 position of 2-acyl lysophospholipid. The protein is 60 kDa lysophospholipase (Aspg) of Mus musculus (Mouse).